The following is an 864-amino-acid chain: Translation initiation factor IF-2 (864 aa).

The span at D140–N171 shows a compositional bias: basic and acidic residues. Positions D140–K179 are disordered. In terms of domain architecture, tr-type G spans I364–K533. Positions G373–T380 are G1. Residue G373–T380 participates in GTP binding. A G2 region spans residues G398–N402. The G3 stretch occupies residues D419–G422. GTP-binding positions include D419–H423 and N473–D476. The interval N473–D476 is G4. Residues S509–K511 form a G5 region.

Belongs to the TRAFAC class translation factor GTPase superfamily. Classic translation factor GTPase family. IF-2 subfamily.

It localises to the cytoplasm. Its function is as follows. One of the essential components for the initiation of protein synthesis. Protects formylmethionyl-tRNA from spontaneous hydrolysis and promotes its binding to the 30S ribosomal subunits. Also involved in the hydrolysis of GTP during the formation of the 70S ribosomal complex. The sequence is that of Translation initiation factor IF-2 from Buchnera aphidicola subsp. Acyrthosiphon pisum (strain 5A).